The primary structure comprises 252 residues: 2-succinyl-6-hydroxy-2,4-cyclohexadiene-1-carboxylate synthase (252 aa).

Belongs to the AB hydrolase superfamily. MenH family. As to quaternary structure, monomer.

It catalyses the reaction 5-enolpyruvoyl-6-hydroxy-2-succinyl-cyclohex-3-ene-1-carboxylate = (1R,6R)-6-hydroxy-2-succinyl-cyclohexa-2,4-diene-1-carboxylate + pyruvate. It participates in quinol/quinone metabolism; 1,4-dihydroxy-2-naphthoate biosynthesis; 1,4-dihydroxy-2-naphthoate from chorismate: step 3/7. The protein operates within quinol/quinone metabolism; menaquinone biosynthesis. Its function is as follows. Catalyzes a proton abstraction reaction that results in 2,5-elimination of pyruvate from 2-succinyl-5-enolpyruvyl-6-hydroxy-3-cyclohexene-1-carboxylate (SEPHCHC) and the formation of 2-succinyl-6-hydroxy-2,4-cyclohexadiene-1-carboxylate (SHCHC). The sequence is that of 2-succinyl-6-hydroxy-2,4-cyclohexadiene-1-carboxylate synthase from Salmonella enteritidis PT4 (strain P125109).